The sequence spans 366 residues: GTP cyclohydrolase 1 type 2 homolog (366 aa).

A divalent metal cation contacts are provided by histidine 64, histidine 65, aspartate 102, histidine 326, and glutamate 329.

Belongs to the GTP cyclohydrolase I type 2/NIF3 family. As to quaternary structure, homohexamer.

This is GTP cyclohydrolase 1 type 2 homolog from Staphylococcus epidermidis (strain ATCC 12228 / FDA PCI 1200).